Consider the following 1398-residue polypeptide: DNA-directed RNA polymerase subunit beta' (1398 aa).

Cysteine 70, cysteine 72, cysteine 85, and cysteine 88 together coordinate Zn(2+). Positions 460, 462, and 464 each coordinate Mg(2+). Zn(2+) contacts are provided by cysteine 814, cysteine 888, cysteine 895, and cysteine 898.

This sequence belongs to the RNA polymerase beta' chain family. In terms of assembly, the RNAP catalytic core consists of 2 alpha, 1 beta, 1 beta' and 1 omega subunit. When a sigma factor is associated with the core the holoenzyme is formed, which can initiate transcription. It depends on Mg(2+) as a cofactor. Requires Zn(2+) as cofactor.

It carries out the reaction RNA(n) + a ribonucleoside 5'-triphosphate = RNA(n+1) + diphosphate. Its function is as follows. DNA-dependent RNA polymerase catalyzes the transcription of DNA into RNA using the four ribonucleoside triphosphates as substrates. The chain is DNA-directed RNA polymerase subunit beta' from Pseudomonas putida (Arthrobacter siderocapsulatus).